The chain runs to 302 residues: Mitochondrial glycine transporter (302 aa).

3 Solcar repeats span residues 22–112, 119–203, and 213–297; these read HPVF…LKHH, PKPL…AKKL, and FSPV…MMEK. The next 6 membrane-spanning stretches (helical) occupy residues 28 to 53, 87 to 113, 125 to 150, 178 to 201, 217 to 243, and 272 to 290; these read FVCG…TRLQ, GVSP…KHHF, VMLG…TRYE, GLTA…TRAK, LNFG…KTHI, and GGLP…AWTV.

The protein belongs to the mitochondrial carrier (TC 2.A.29) family. SLC25A38 subfamily.

It is found in the mitochondrion inner membrane. It carries out the reaction glycine(in) = glycine(out). Functionally, mitochondrial glycine transporter that imports glycine into the mitochondrial matrix. Plays an important role in providing glycine for the first enzymatic step in heme biosynthesis, the condensation of glycine with succinyl-CoA to produce 5-aminolevulinate (ALA) in the mitochondrial matrix. Required during erythropoiesis. May play a role as pro-apoptotic protein that induces caspase-dependent apoptosis. The sequence is that of Mitochondrial glycine transporter from Xenopus tropicalis (Western clawed frog).